The primary structure comprises 349 residues: Estrogen receptor (349 aa).

Residues 1–5 constitute a DNA-binding region (nuclear receptor); it reads YEVGM. The tract at residues 1 to 38 is disordered; it reads YEVGMMKGGIRKDRRGGRMLKHKRQREENDSRNAGALT. Basic residues predominate over residues 12–24; it reads KDRRGGRMLKHKR. In terms of domain architecture, NR LBD spans 65–301; it reads TADQMVSALL…DLLLEMLDAH (237 aa). Residues 306 to 327 are disordered; that stretch reads PAAKGSPPSEDDPLNQLAVPSP.

This sequence belongs to the nuclear hormone receptor family. NR3 subfamily. As to quaternary structure, binds DNA as a homodimer. Can form a heterodimer with ER-beta.

The protein localises to the nucleus. Its function is as follows. The steroid hormones and their receptors are involved in the regulation of eukaryotic gene expression and affect cellular proliferation and differentiation in target tissues. This chain is Estrogen receptor (ESR1), found in Anolis carolinensis (Green anole).